The primary structure comprises 212 residues: Adenylate kinase (212 aa).

10–15 serves as a coordination point for ATP; it reads GAGKGT. The segment at 30–59 is NMP; that stretch reads ALGDIFRTIIKTSTSEAELINNYVKQGELV. AMP-binding positions include R36, 57–59, 85–88, and Q92; these read ELV and GYPR. An LID region spans residues 122–160; sequence GRYSCKNCRKIYNSYFLQPKTDNVCDVCGSSTFDYRKDD. R123 provides a ligand contact to ATP. Residues C126 and C129 each coordinate Zn(2+). An ATP-binding site is contributed by 132–133; the sequence is IY. 2 residues coordinate Zn(2+): C146 and C149. The AMP site is built by R157 and R168. K196 is a binding site for ATP.

It belongs to the adenylate kinase family. Monomer.

Its subcellular location is the cytoplasm. The enzyme catalyses AMP + ATP = 2 ADP. It participates in purine metabolism; AMP biosynthesis via salvage pathway; AMP from ADP: step 1/1. In terms of biological role, catalyzes the reversible transfer of the terminal phosphate group between ATP and AMP. Plays an important role in cellular energy homeostasis and in adenine nucleotide metabolism. The polypeptide is Adenylate kinase (Rickettsia akari (strain Hartford)).